We begin with the raw amino-acid sequence, 341 residues long: DNA-directed RNA polymerase subunit alpha (341 aa).

An alpha N-terminal domain (alpha-NTD) region spans residues 1-226; that stretch reads MLIAQRPTIT…ELFGLVRELN (226 aa). Positions 241-341 are alpha C-terminal domain (alpha-CTD); it reads AALAADLALP…DQRYIETEQL (101 aa).

It belongs to the RNA polymerase alpha chain family. Homodimer. The RNAP catalytic core consists of 2 alpha, 1 beta, 1 beta' and 1 omega subunit. When a sigma factor is associated with the core the holoenzyme is formed, which can initiate transcription.

The catalysed reaction is RNA(n) + a ribonucleoside 5'-triphosphate = RNA(n+1) + diphosphate. Its function is as follows. DNA-dependent RNA polymerase catalyzes the transcription of DNA into RNA using the four ribonucleoside triphosphates as substrates. This Acidothermus cellulolyticus (strain ATCC 43068 / DSM 8971 / 11B) protein is DNA-directed RNA polymerase subunit alpha.